Reading from the N-terminus, the 419-residue chain is Serine--tRNA ligase (419 aa).

226–228 (TSE) serves as a coordination point for L-serine. ATP contacts are provided by residues 257–259 (RRE) and Val-273. Glu-280 lines the L-serine pocket. Residue 344 to 347 (ELTS) participates in ATP binding. L-serine is bound at residue Thr-379.

Belongs to the class-II aminoacyl-tRNA synthetase family. Type-1 seryl-tRNA synthetase subfamily. Homodimer. The tRNA molecule binds across the dimer.

Its subcellular location is the cytoplasm. The enzyme catalyses tRNA(Ser) + L-serine + ATP = L-seryl-tRNA(Ser) + AMP + diphosphate + H(+). The catalysed reaction is tRNA(Sec) + L-serine + ATP = L-seryl-tRNA(Sec) + AMP + diphosphate + H(+). Its pathway is aminoacyl-tRNA biosynthesis; selenocysteinyl-tRNA(Sec) biosynthesis; L-seryl-tRNA(Sec) from L-serine and tRNA(Sec): step 1/1. Its function is as follows. Catalyzes the attachment of serine to tRNA(Ser). Is also able to aminoacylate tRNA(Sec) with serine, to form the misacylated tRNA L-seryl-tRNA(Sec), which will be further converted into selenocysteinyl-tRNA(Sec). The polypeptide is Serine--tRNA ligase (Corynebacterium diphtheriae (strain ATCC 700971 / NCTC 13129 / Biotype gravis)).